The following is a 480-amino-acid chain: Dimethyl-sulfide monooxygenase (480 aa).

FMN contacts are provided by Asp-58, Thr-104, His-154, Tyr-158, and Ser-230. The segment at 423-480 is disordered; it reads QDSYKPGSLRRKLIGTNDGRVESTHPAAQYRDAYVGKESVADRTQPSPFANAKAPVAE.

Belongs to the NtaA/SnaA/DszA monooxygenase family. Heterodimer of 2 subunits, DmoA and DmoB. It depends on FMN as a cofactor.

The enzyme catalyses dimethyl sulfide + NADH + O2 + H(+) = methanethiol + formaldehyde + NAD(+) + H2O. Its activity is regulated as follows. Inhibited by umbelliferone, 8-anilinonaphthalenesulfonate, a range of metal-chelating agents, and Hg(2+), Cd(2+) and Pb(2+) ions. Functionally, monooxygenase that mediates oxidation of dimethyl sulfide, the first step in dimethyl sulfide degradation pathway. Has much lower activity with diethyl sulfide and other short-chain alkyl methyl sulfides. The chain is Dimethyl-sulfide monooxygenase (dmoA) from Hyphomicrobium sulfonivorans.